Here is a 158-residue protein sequence, read N- to C-terminus: Chromobox protein homolog 7 (158 aa).

The 59-residue stretch at 11–69 (FAVESIRKKRVRKGKVEYLVKWKGWPPKYSTWEPEEHILDPRLVMAYEEKEEKDRASGY) folds into the Chromo domain. The tract at residues 60-124 (KEEKDRASGY…PPPWTPMLPS (65 aa)) is disordered. The segment covering 68 to 78 (GYRKRGPKPKR) has biased composition (basic residues).

In terms of assembly, component of a PRC1-like complex. Distinct PRC1-like core complexes are composed of a RING1 subunit (RING1B or RING1A), one of the six PCGF proteins (PCGF1-6), one PHC protein (PHC1-3) and one of the CBX proteins (CBX2, CBX4, CBX6, CBX7 or CBX8). The composition of the PRC1 complex may differ between the PRC1 complex in pluripotent embryonic stem cells containing RNF2, CBX7 and PCGF2, and the PRC1 complex in differentiating cells containing RNF2, CBX2, CBX4 and BMI1. Interacts with RING1. Interacts with RNF2/RING1B. Interacts with PCGF1, PCGF2, PCGF3, PCGF5 and PCGF6. Interacts (via chromodomain) with histone H3K9Me3 and H3K27me3. Interacts with H3K9Me2 and H4K20Me1. Interacts (via chromodomain) with single-stranded and double-stranded RNA; RNA binding seems to be required for the localization to chromatin.

The protein localises to the nucleus. Its subcellular location is the chromosome. Functionally, component of a Polycomb group (PcG) multiprotein PRC1-like complex, a complex class required to maintain the transcriptionally repressive state of many genes, including Hox genes, throughout development. PcG PRC1 complex acts via chromatin remodeling and modification of histones; it mediates monoubiquitination of histone H2A 'Lys-119', rendering chromatin heritably changed in its expressibility. Promotes histone H3 trimethylation at 'Lys-9' (H3K9me3). Binds to histone H3 trimethylated 'Lys-9' (H3K9me3) or at 'Lys-27' (H3K27me3). May possibly also bind trimethylated lysine residues in other proteins (in vitro). Binds non-coding, single-stranded and double-stranded RNA. Plays a role in the timely repression of differentiation-specific genes in pluripotent embryonic stem cells to maintain the undifferentiated state. Regulator of cellular lifespan by maintaining the repression of CDKN2A, but not by inducing telomerase activity. This is Chromobox protein homolog 7 (Cbx7) from Rattus norvegicus (Rat).